The sequence spans 581 residues: A-type ATP synthase subunit A (581 aa).

232-239 is an ATP binding site; the sequence is GPFGSGKT.

Belongs to the ATPase alpha/beta chains family. Has multiple subunits with at least A(3), B(3), C, D, E, F, H, I and proteolipid K(x).

The protein localises to the cell membrane. The catalysed reaction is ATP + H2O + 4 H(+)(in) = ADP + phosphate + 5 H(+)(out). Its function is as follows. Component of the A-type ATP synthase that produces ATP from ADP in the presence of a proton gradient across the membrane. The A chain is the catalytic subunit. The sequence is that of A-type ATP synthase subunit A from Methanocorpusculum labreanum (strain ATCC 43576 / DSM 4855 / Z).